A 262-amino-acid polypeptide reads, in one-letter code: Hydroxyethylthiazole kinase (262 aa).

Met-43 is a substrate binding site. Positions 118 and 164 each coordinate ATP. Residue Ala-191 participates in substrate binding.

This sequence belongs to the Thz kinase family. Mg(2+) serves as cofactor.

It catalyses the reaction 5-(2-hydroxyethyl)-4-methylthiazole + ATP = 4-methyl-5-(2-phosphooxyethyl)-thiazole + ADP + H(+). It participates in cofactor biosynthesis; thiamine diphosphate biosynthesis; 4-methyl-5-(2-phosphoethyl)-thiazole from 5-(2-hydroxyethyl)-4-methylthiazole: step 1/1. In terms of biological role, catalyzes the phosphorylation of the hydroxyl group of 4-methyl-5-beta-hydroxyethylthiazole (THZ). The sequence is that of Hydroxyethylthiazole kinase from Cereibacter sphaeroides (strain KD131 / KCTC 12085) (Rhodobacter sphaeroides).